A 400-amino-acid polypeptide reads, in one-letter code: Minor capsid protein VP2 (400 aa).

Glycine 2 carries the N-myristoyl glycine; by host lipid modification. The disordered stretch occupies residues 99 to 118; sequence HPGDLPPNTPTGSASGLHPT. Residues 307–342 are D1; sequence LGQWISFSGPTGGTPHYATPDWILYVLEQLNADTYK. Residues 347–394 form a DNA-binding region; that stretch reads AVKRKQDELHPVSPTKKANKAKKSSSPGTNSGNRSKKRRGRSTSRSTT. Positions 348-400 are disordered; the sequence is VKRKQDELHPVSPTKKANKAKKSSSPGTNSGNRSKKRRGRSTSRSTTVRRNRI. A Nuclear localization signal motif is present at residues 359–369; the sequence is SPTKKANKAKK. The span at 370–379 shows a compositional bias: low complexity; it reads SSSPGTNSGN. Positions 380–400 are enriched in basic residues; sequence RSKKRRGRSTSRSTTVRRNRI.

This sequence belongs to the polyomaviruses capsid protein VP2 family. Forms homooligomers, and heterooligomers with VP3 in the endoplasmic reticulum membrane. Interacts (via D1 domain) with VP1. In terms of assembly, interacts (via D1 domain) with VP1.

It localises to the virion. The protein localises to the host nucleus. Its subcellular location is the host endoplasmic reticulum. The protein resides in the host endoplasmic reticulum membrane. Isoform VP2 is a structural protein that resides within the core of the capsid surrounded by 72 VP1 pentamers. Participates in host cell receptor binding together with VP1. Following virus endocytosis and trafficking to the endoplasmic reticulum, VP2 and VP3 form oligomers and integrate into the endoplasmic reticulum membrane. Heterooligomer VP2-VP3 may create a viroporin for transporting the viral genome across the endoplasmic reticulum membrane to the cytoplasm. Nuclear entry of the viral DNA involves the selective exposure and importin recognition of VP2 or VP3 nuclear localization signal (shared C-terminus). Plays a role in virion assembly within the nucleus in particular through a DNA-binding domain located in the C-terminal region. An N-terminal myristoylation suggests a scaffold function for virion assembly. Functionally, structural protein that resides within the core of the capsid surrounded by 72 VP1 pentamers. Following virus endocytosis and trafficking to the endoplasmic reticulum, VP2 and VP3 form oligomers and integrate into the endoplasmic reticulum membrane. Heterooligomer VP2-VP3 may create a viroporin for transporting the viral genome across the endoplasmic reticulum membrane to the cytoplasm. Nuclear entry of the viral DNA involves the selective exposure and importin recognition of VP2 or VP3 nuclear localization signal (shared C-terminus). Plays a role in virion assembly within the nucleus. This KI polyomavirus (isolate Stockholm 380) (KIPyV) protein is Minor capsid protein VP2.